The sequence spans 330 residues: Probable inactive heme oxygenase 2, chloroplastic (330 aa).

Composition is skewed to low complexity over residues 1-13 (MPLA…SAVV) and 56-69 (AAEA…VDEA). Disordered regions lie at residues 1–27 (MPLA…RARP), 50–82 (PSPP…YPRQ), and 107–156 (TTLK…LEGE). Residues 1–47 (MPLAAAVAASAVVPPRPPPPPPRRARPLRSFTGLILTRDLAALTVAR) constitute a chloroplast transit peptide. A compositionally biased stretch (acidic residues) spans 114-151 (TGAEEEVGDGVSEDASASEEEEEEEDDDDVVEEEEEGA).

It belongs to the heme oxygenase family.

The protein resides in the plastid. It is found in the chloroplast. Probable inactive heme oxygenase that may play a role in the regulation of phytochrome assembly and photomorphogenesis. The chain is Probable inactive heme oxygenase 2, chloroplastic (HO2) from Oryza sativa subsp. japonica (Rice).